A 371-amino-acid polypeptide reads, in one-letter code: MDVVEVTEGRTRFFVSRQDPHLQFPPGSGQVFYNSRMEMNRDATVLLLSVLRPESYLDAMGASGVRGLRVAHEVGIPVTINDWNAKAVDLARQNVEALGLVAEVTHGDANVLMSGRTFDAVDLDPFGTPAPFVDSAARSAGNYLFVTATDTAPLCGAHLKAGMRRYFSRPRNTEYHAEVGLRTLMGFVVREVIKYDRGVEPLFCYAHEHFHRLHLRLRYGAAAADRALARIGYVMQCPNCLYRSEQTGMLPEPEECPLCSAALVPVGPLWTGGINDDATLAAMQEALPSVTAGTGARIGRLLATCRQELDTSSHYDYHVIAKRLRVSPGRIETVIERLVALGYRASRAHYSGTALKTDAPLPVLEKVVSGG.

Residues 4–368 (VEVTEGRTRF…APLPVLEKVV (365 aa)) form the Trm1 methyltransferase domain. Residues Arg-41, Arg-66, Asp-82, Asp-108, and Ala-109 each coordinate S-adenosyl-L-methionine. 4 residues coordinate Zn(2+): Cys-237, Cys-240, Cys-256, and Cys-259.

Belongs to the class I-like SAM-binding methyltransferase superfamily. Trm1 family.

The enzyme catalyses guanosine(26) in tRNA + 2 S-adenosyl-L-methionine = N(2)-dimethylguanosine(26) in tRNA + 2 S-adenosyl-L-homocysteine + 2 H(+). Its function is as follows. Dimethylates a single guanine residue at position 26 of a number of tRNAs using S-adenosyl-L-methionine as donor of the methyl groups. The protein is tRNA (guanine(26)-N(2))-dimethyltransferase of Methanoculleus marisnigri (strain ATCC 35101 / DSM 1498 / JR1).